The chain runs to 285 residues: CCR4-NOT transcription complex subunit 7 (285 aa).

A divalent metal cation-binding residues include aspartate 40, glutamate 42, aspartate 161, aspartate 230, and glutamate 278.

Belongs to the CAF1 family. As to quaternary structure, component of the CCR4-NOT complex. Mn(2+) serves as cofactor. The cofactor is Mg(2+). Co(2+) is required as a cofactor.

It is found in the nucleus. The protein resides in the cytoplasm. The enzyme catalyses Exonucleolytic cleavage of poly(A) to 5'-AMP.. Its function is as follows. Has 3'-5' poly(A) exoribonuclease activity for synthetic poly(A) RNA substrate. Catalytic component of the CCR4-NOT complex which is one of the major cellular mRNA deadenylases and is linked to various cellular processes including bulk mRNA degradation, miRNA-mediated repression, translational repression during translational initiation and general transcription regulation. During miRNA-mediated repression the complex also seems to act as translational repressor during translational initiation. Additional complex functions may be a consequence of its influence on mRNA expression. The sequence is that of CCR4-NOT transcription complex subunit 7 (cnot7) from Xenopus laevis (African clawed frog).